Consider the following 445-residue polypeptide: Ribulose bisphosphate carboxylase large chain (445 aa).

Substrate-binding residues include asparagine 89 and threonine 139. Lysine 141 functions as the Proton acceptor in the catalytic mechanism. Residue lysine 143 coordinates substrate. Mg(2+)-binding residues include lysine 167, aspartate 169, and glutamate 170. N6-carboxylysine is present on lysine 167. Catalysis depends on histidine 260, which acts as the Proton acceptor. Substrate contacts are provided by arginine 261, histidine 293, and serine 345.

This sequence belongs to the RuBisCO large chain family. Type I subfamily. As to quaternary structure, heterohexadecamer of 8 large chains and 8 small chains; disulfide-linked. The disulfide link is formed within the large subunit homodimers. Mg(2+) serves as cofactor. The disulfide bond which can form in the large chain dimeric partners within the hexadecamer appears to be associated with oxidative stress and protein turnover.

Its subcellular location is the plastid. The protein resides in the chloroplast. The enzyme catalyses 2 (2R)-3-phosphoglycerate + 2 H(+) = D-ribulose 1,5-bisphosphate + CO2 + H2O. It carries out the reaction D-ribulose 1,5-bisphosphate + O2 = 2-phosphoglycolate + (2R)-3-phosphoglycerate + 2 H(+). In terms of biological role, ruBisCO catalyzes two reactions: the carboxylation of D-ribulose 1,5-bisphosphate, the primary event in carbon dioxide fixation, as well as the oxidative fragmentation of the pentose substrate in the photorespiration process. Both reactions occur simultaneously and in competition at the same active site. The polypeptide is Ribulose bisphosphate carboxylase large chain (Callicarpa dichotoma (Purple beautyberry)).